A 416-amino-acid chain; its full sequence is Serine hydroxymethyltransferase (416 aa).

(6S)-5,6,7,8-tetrahydrofolate contacts are provided by residues Leu-121 and 125–127; that span reads GHL. Lys-230 is subject to N6-(pyridoxal phosphate)lysine.

This sequence belongs to the SHMT family. As to quaternary structure, homodimer. Pyridoxal 5'-phosphate is required as a cofactor.

Its subcellular location is the cytoplasm. It catalyses the reaction (6R)-5,10-methylene-5,6,7,8-tetrahydrofolate + glycine + H2O = (6S)-5,6,7,8-tetrahydrofolate + L-serine. The protein operates within one-carbon metabolism; tetrahydrofolate interconversion. It functions in the pathway amino-acid biosynthesis; glycine biosynthesis; glycine from L-serine: step 1/1. Catalyzes the reversible interconversion of serine and glycine with tetrahydrofolate (THF) serving as the one-carbon carrier. This reaction serves as the major source of one-carbon groups required for the biosynthesis of purines, thymidylate, methionine, and other important biomolecules. Also exhibits THF-independent aldolase activity toward beta-hydroxyamino acids, producing glycine and aldehydes, via a retro-aldol mechanism. The chain is Serine hydroxymethyltransferase from Nitrosomonas europaea (strain ATCC 19718 / CIP 103999 / KCTC 2705 / NBRC 14298).